The primary structure comprises 644 residues: DNA mismatch repair protein MutL (644 aa).

The tract at residues 363–405 (GTFNPFTDDKTNQHYTKAGSGSGSGYSSGSSSSSGSGSGSSYS) is disordered. Residues 389 to 405 (SSGSSSSSGSGSGSSYS) show a composition bias toward low complexity.

This sequence belongs to the DNA mismatch repair MutL/HexB family.

Functionally, this protein is involved in the repair of mismatches in DNA. It is required for dam-dependent methyl-directed DNA mismatch repair. May act as a 'molecular matchmaker', a protein that promotes the formation of a stable complex between two or more DNA-binding proteins in an ATP-dependent manner without itself being part of a final effector complex. The sequence is that of DNA mismatch repair protein MutL from Flavobacterium johnsoniae (strain ATCC 17061 / DSM 2064 / JCM 8514 / BCRC 14874 / CCUG 350202 / NBRC 14942 / NCIMB 11054 / UW101) (Cytophaga johnsonae).